The chain runs to 216 residues: MSQQASVGRGLPPDVLAEQVELWWSQQPRRSLLCFSVAVILVAGCGAGGVALLSSTSSRSGEWRLAVGTVLCLLALLVLVKQLMSSAVQDMNCIRQAQHVALLRSGGGADAVVVLLSGFVLLVTGLTLAGLAAAPAPARPLAAMLSVGITLASLGSVLLLGLLLYQVGVSGHCPPICTEAFSAQNGHGDNSSIFSISGQLSSGQRHETTSSIASLI.

4 helical membrane passes run 32-52 (LLCF…GVAL), 65-85 (LAVG…QLMS), 111-131 (AVVV…LAGL), and 144-164 (MLSV…GLLL).

The protein localises to the membrane. The chain is Transmembrane protein 125 (Tmem125) from Mus musculus (Mouse).